A 20-amino-acid chain; its full sequence is Protein C activator (20 aa).

Positions 1–20 (VVGGDECNINEHRSLALMYA) constitute a Peptidase S1 domain.

This sequence belongs to the peptidase S1 family. Snake venom subfamily. In terms of assembly, monomer. Glycosylated. In terms of tissue distribution, expressed by the venom gland.

Its subcellular location is the secreted. Its activity is regulated as follows. Inhibited by calcium. In terms of biological role, snake venom serine protease that selectively cleaves the heavy chain of protein C (PROC). This activation is thrombomodulin-independent. This Agkistrodon bilineatus (Cantil) protein is Protein C activator.